Reading from the N-terminus, the 149-residue chain is Arginine repressor (149 aa).

It belongs to the ArgR family.

Its subcellular location is the cytoplasm. It participates in amino-acid biosynthesis; L-arginine biosynthesis [regulation]. Its function is as follows. Regulates arginine biosynthesis genes. The protein is Arginine repressor of Bacillus mycoides (strain KBAB4) (Bacillus weihenstephanensis).